The chain runs to 238 residues: ATP synthase subunit a (238 aa).

The next 5 helical transmembrane spans lie at glycine 18–glycine 38, phenylalanine 76–proline 96, valine 117–valine 137, leucine 173–threonine 193, and tryptophan 208–tyrosine 230.

It belongs to the ATPase A chain family. As to quaternary structure, F-type ATPases have 2 components, CF(1) - the catalytic core - and CF(0) - the membrane proton channel. CF(1) has five subunits: alpha(3), beta(3), gamma(1), delta(1), epsilon(1). CF(0) has three main subunits: a(1), b(2) and c(9-12). The alpha and beta chains form an alternating ring which encloses part of the gamma chain. CF(1) is attached to CF(0) by a central stalk formed by the gamma and epsilon chains, while a peripheral stalk is formed by the delta and b chains.

Its subcellular location is the cell membrane. Its function is as follows. Key component of the proton channel; it plays a direct role in the translocation of protons across the membrane. In Shouchella clausii (strain KSM-K16) (Alkalihalobacillus clausii), this protein is ATP synthase subunit a.